The primary structure comprises 311 residues: Porphobilinogen deaminase (311 aa).

Cys241 carries the S-(dipyrrolylmethanemethyl)cysteine modification.

The protein belongs to the HMBS family. As to quaternary structure, monomer. Dipyrromethane serves as cofactor.

The enzyme catalyses 4 porphobilinogen + H2O = hydroxymethylbilane + 4 NH4(+). It participates in porphyrin-containing compound metabolism; protoporphyrin-IX biosynthesis; coproporphyrinogen-III from 5-aminolevulinate: step 2/4. Tetrapolymerization of the monopyrrole PBG into the hydroxymethylbilane pre-uroporphyrinogen in several discrete steps. The polypeptide is Porphobilinogen deaminase (Carboxydothermus hydrogenoformans (strain ATCC BAA-161 / DSM 6008 / Z-2901)).